The primary structure comprises 444 residues: Presenilin sel-12 (444 aa).

Over 1–45 the chain is Cytoplasmic; the sequence is MPSTRRQQEGGGADAETHTVYGTNLITNRNSQEDENVVEEAELKY. A helical membrane pass occupies residues 46–66; that stretch reads GASHVIHLFVPVSLCMALVVF. Topologically, residues 67–101 are lumenal; that stretch reads TMNTITFYSQNNGRHLLYTPFVRETDSIVEKGLMS. Residues 102–122 traverse the membrane as a helical segment; that stretch reads LGNALVMLCVVVLMTVLLIVF. Residues 123-130 are Cytoplasmic-facing; sequence YKYKFYKL. The chain crosses the membrane as a helical span at residues 131-151; that stretch reads IHGWLIVSSFLLLFLFTTIYV. Residues 152–163 are Lumenal-facing; it reads QEVLKSFDVSPS. Residues 164-184 form a helical membrane-spanning segment; the sequence is ALLVLFGLGNYGVLGMMCIHW. The Cytoplasmic segment spans residues 185–189; the sequence is KGPLR. Residues 190 to 210 form a helical membrane-spanning segment; sequence LQQFYLITMSALMALVFIKYL. The Lumenal segment spans residues 211-212; the sequence is PE. The chain crosses the membrane as a helical span at residues 213 to 233; sequence WTVWFVLFVISVWDLVAVLTP. Residue aspartate 226 is part of the active site. The Cytoplasmic portion of the chain corresponds to 234–359; that stretch reads KGPLRYLVET…RHEEEERGVK (126 aa). The segment at 275-331 is disordered; the sequence is TDPREPTSSDSNTSTAFPGEASCSSETPKRPKVKRIPQKVQIESNTTASTTQNSGVR. Polar residues-rich tracts occupy residues 282 to 300 and 315 to 329; these read SSDSNTSTAFPGEASCSSE and QIESNTTASTTQNSG. Residues 360-380 traverse the membrane as a helical segment; it reads LGLGDFIFYSVLLGKASSYFD. Residue aspartate 364 is part of the active site. At 381-384 the chain is on the lumenal side; it reads WNTT. The helical transmembrane segment at 385–405 threads the bilayer; it reads IACYVAILIGLCFTLVLLAVF. The Cytoplasmic segment spans residues 406–413; the sequence is KRALPALP. Positions 410 to 412 match the PAL motif; that stretch reads PAL. Positions 414 to 434 form an intramembrane region, helical; it reads ISIFSGLIFYFCTRWIITPFV. At 435-444 the chain is on the cytoplasmic side; that stretch reads TQVSQKCLLY.

Belongs to the peptidase A22A family. Homodimer. Component of the gamma-secretase complex, a complex probably composed of the presenilin homodimer (sel-12, hop-1 or spe-4), nicastrin (aph-2), aph-1 and pen-2. Interacts with sel-10. In terms of tissue distribution, expressed in most neurons.

Its subcellular location is the endoplasmic reticulum membrane. The protein localises to the golgi apparatus membrane. Probable catalytic subunit of the gamma-secretase complex, an endoprotease complex that catalyzes the intramembrane cleavage of integral membrane proteins such as Notch receptors (lin-12 or glp-1). Provides the major presenilin function compared to hop-1 and spe-4. Required cell-autonomously for correct neurite connectivity of the AIY cholinergic interneurons and their correct functioning in thermotaxis. Required for mesodermal patterning of muscle function. Promotes basement membrane gap formation during tissue remodeling. This Caenorhabditis elegans protein is Presenilin sel-12.